Reading from the N-terminus, the 257-residue chain is Acetylglutamate kinase (257 aa).

Substrate-binding positions include 43 to 44 (GG), Arg65, and Asn157. Residues 180-185 (DVSGIL) and 208-210 (IIT) contribute to the ATP site.

This sequence belongs to the acetylglutamate kinase family. ArgB subfamily. Homodimer.

The protein localises to the cytoplasm. The enzyme catalyses N-acetyl-L-glutamate + ATP = N-acetyl-L-glutamyl 5-phosphate + ADP. It participates in amino-acid biosynthesis; L-arginine biosynthesis; N(2)-acetyl-L-ornithine from L-glutamate: step 2/4. In terms of biological role, catalyzes the ATP-dependent phosphorylation of N-acetyl-L-glutamate. This chain is Acetylglutamate kinase, found in Pectobacterium atrosepticum (strain SCRI 1043 / ATCC BAA-672) (Erwinia carotovora subsp. atroseptica).